We begin with the raw amino-acid sequence, 47 residues long: MAKGKRTFQPNNRRRARTHGFRLRMRTRAGRAIIAGRRRKGRRELTA.

It belongs to the bacterial ribosomal protein bL34 family.

This Mycobacteroides abscessus (strain ATCC 19977 / DSM 44196 / CCUG 20993 / CIP 104536 / JCM 13569 / NCTC 13031 / TMC 1543 / L948) (Mycobacterium abscessus) protein is Large ribosomal subunit protein bL34.